Reading from the N-terminus, the 854-residue chain is SH2 domain-containing protein 3C (854 aa).

Ser-22 carries the post-translational modification Phosphoserine. Residues 34-43 show a composition bias toward low complexity; sequence RSSASASIRS. The interval 34–129 is disordered; the sequence is RSSASASIRS…AKEAGEGTEA (96 aa). Positions 99–124 are enriched in basic and acidic residues; sequence EVSRESHLVSRRLPEPPDLEAAKEAG. One can recognise an SH2 domain in the interval 215 to 314; sequence WYHGRIPREV…QSGAIIYCPV (100 aa). 2 positions are modified to phosphotyrosine: Tyr-273 and Tyr-278. Disordered stretches follow at residues 330–384, 398–417, and 422–520; these read SQGS…PRDS, LHSP…YSTV, and APSA…ERQK. The segment covering 333–347 has biased composition (low complexity); it reads SSKTASPASPSGSKG. The residue at position 354 (Ser-354) is a Phosphoserine. Low complexity-rich tracts occupy residues 400 to 415, 422 to 436, and 474 to 485; these read SPLS…PAYS, APSA…PASP, and SPSPSLSSYSDP. Phosphoserine is present on Ser-435. Residues 508 to 520 are compositionally biased toward basic and acidic residues; the sequence is TPRKARGSGERQK. One can recognise a Ras-GEF domain in the interval 580-848; sequence DARTLARHVT…TALSHKLEPA (269 aa). Tyr-787 is modified (phosphotyrosine).

Component of a complex comprised of SH2D3C, BCAR1/CAS, and CRK. Within the complex, interacts with CRK and (via C-terminus) with BCAR1/CAS (via C-terminus). Interacts with NEDD9/HEF1. Interacts with EPHB2. As to quaternary structure, interacts with NEDD9/HEF1. Interacts with BCAR1/CAS. Interacts with PTK2B. In terms of assembly, interacts (via C-terminus) with BCAR1/CAS (via C-terminus). Interacts with IGF1. In terms of processing, phosphorylated by MAPK/ERK upon T-cell receptor stimulation in T-cells. As to expression, expressed in the olfactory bulb and olfactory sensory neurons (at protein level). Expressed in B cells (at protein level). Expressed in T lymphocytes. In terms of tissue distribution, expressed in hematopoietic cells from spleen, lymph node and thymus (at protein level). Expressed weakly in the lung (at protein level). Expressed in the brain, lung, kidney, and weakly expressed in the liver and lung (at protein level).

The protein resides in the cytoplasm. It localises to the cell membrane. The protein localises to the cell projection. Its subcellular location is the axon. It is found in the ruffle membrane. Acts as an adapter protein that mediates cell signaling pathways involved in cellular functions such as cell adhesion and migration, tissue organization, and the regulation of the immune response. Plays a role in integrin-mediated cell adhesion through BCAR1-CRK-RAPGEF1 signaling and activation of the small GTPase RAP1. Promotes cell migration and invasion through the extracellular matrix. Required for marginal zone B-cell development and thymus-independent type 2 immune responses. Mediates migration and adhesion of B cells in the splenic marginal zone via promoting hyperphosphorylation of NEDD9/CASL. Plays a role in CXCL13-induced chemotaxis of B-cells. Plays a role in the migration of olfactory sensory neurons (OSNs) into the forebrain and the innervation of the olfactory bulb by the OSN axons during development. Required for the efficient tyrosine phosphorylation of BCAR1 in OSN axons. Functionally, important regulator of chemokine-induced, integrin-mediated T lymphocyte adhesion and migration, acting upstream of RAP1. Required for tissue-specific adhesion of T lymphocytes to peripheral tissues. Required for basal and CXCL2 stimulated serine-threonine phosphorylation of NEDD9. May be involved in the regulation of T-cell receptor-mediated IL2 production through the activation of the JNK pathway in T-cells. In terms of biological role, may be involved in the BCAR1/CAS-mediated JNK activation pathway. The chain is SH2 domain-containing protein 3C (Sh2d3c) from Mus musculus (Mouse).